The primary structure comprises 85 residues: U4-theraphotoxin-Hhn1a (85 aa).

Positions 1–22 are cleaved as a signal peptide; sequence MKVTLIVILTCAAVLVLHTTAA. A propeptide spanning residues 23–48 is cleaved from the precursor; the sequence is EELEAESQLMEVGMPDTELAAVDEER. 3 disulfides stabilise this stretch: cysteine 52/cysteine 66, cysteine 56/cysteine 77, and cysteine 71/cysteine 82.

The protein belongs to the neurotoxin 12 (Hwtx-2) family. 02 (Hwtx-2) subfamily. As to quaternary structure, monomer. In terms of tissue distribution, expressed by the venom gland.

Its subcellular location is the secreted. Functionally, neurotoxin active on both insects and mammals. The sequence is that of U4-theraphotoxin-Hhn1a from Cyriopagopus hainanus (Chinese bird spider).